A 470-amino-acid polypeptide reads, in one-letter code: Uronate isomerase (470 aa).

The protein belongs to the metallo-dependent hydrolases superfamily. Uronate isomerase family.

The enzyme catalyses D-glucuronate = D-fructuronate. The catalysed reaction is aldehydo-D-galacturonate = keto-D-tagaturonate. Its pathway is carbohydrate metabolism; pentose and glucuronate interconversion. This chain is Uronate isomerase, found in Vibrio parahaemolyticus serotype O3:K6 (strain RIMD 2210633).